The following is a 299-amino-acid chain: ATP phosphoribosyltransferase (299 aa).

This sequence belongs to the ATP phosphoribosyltransferase family. Long subfamily. Mg(2+) serves as cofactor.

The protein resides in the cytoplasm. It carries out the reaction 1-(5-phospho-beta-D-ribosyl)-ATP + diphosphate = 5-phospho-alpha-D-ribose 1-diphosphate + ATP. The protein operates within amino-acid biosynthesis; L-histidine biosynthesis; L-histidine from 5-phospho-alpha-D-ribose 1-diphosphate: step 1/9. With respect to regulation, feedback inhibited by histidine. Catalyzes the condensation of ATP and 5-phosphoribose 1-diphosphate to form N'-(5'-phosphoribosyl)-ATP (PR-ATP). Has a crucial role in the pathway because the rate of histidine biosynthesis seems to be controlled primarily by regulation of HisG enzymatic activity. The polypeptide is ATP phosphoribosyltransferase (Actinobacillus pleuropneumoniae serotype 7 (strain AP76)).